Consider the following 357-residue polypeptide: Protein XRP2 (357 aa).

Basic residues predominate over residues 1–11; sequence MGCFFSKRRKP. A disordered region spans residues 1–39; sequence MGCFFSKRRKPAQGGQQQGASQEPAAGEEKAPQYSWDQR. The N-myristoyl glycine moiety is linked to residue Gly-2. Cys-3 is lipidated: S-palmitoyl cysteine. The segment covering 12 to 25 has biased composition (low complexity); the sequence is AQGGQQQGASQEPA. The C-CAP/cofactor C-like domain maps to 32 to 186; the sequence is PQYSWDQRAK…TWSNIHDFTP (155 aa). GTP is bound by residues 105-106 and 122-125; these read GS and QQFR.

This sequence belongs to the TBCC family. Post-translationally, myristoylated on Gly-2; which may be required for membrane targeting. In terms of processing, palmitoylated on Cys-3; which may be required for plasma membrane targeting.

The protein resides in the cell membrane. Functionally, acts as a GTPase-activating protein (GAP) for tubulin in concert with tubulin-specific chaperone C, but does not enhance tubulin heterodimerization. Acts as a GTPase-activating protein. May act as guanine nucleotide dissociation inhibitor towards ADP-ribosylation factor-like proteins. In Gallus gallus (Chicken), this protein is Protein XRP2 (RP2).